The primary structure comprises 396 residues: Maltose/maltodextrin-binding periplasmic protein (396 aa).

Positions 1 to 26 (MKIKTGVGILALSALTTMMISAPALA) are cleaved as a signal peptide.

It belongs to the bacterial solute-binding protein 1 family. The complex is composed of two ATP-binding proteins (MalK), two transmembrane proteins (MalG and MalF) and a solute-binding protein (MalE).

The protein localises to the periplasm. Its function is as follows. Part of the ABC transporter complex MalEFGK involved in maltose/maltodextrin import. Binds maltose and higher maltodextrins. The sequence is that of Maltose/maltodextrin-binding periplasmic protein (malE) from Salmonella typhimurium (strain LT2 / SGSC1412 / ATCC 700720).